Reading from the N-terminus, the 122-residue chain is MQNLSILLVCSFCILGHVSSAGIRIGNELKNKKLLWMRCYSKDDVIGPLIIPIGGHRFNYFGTNIFATTRFMCTLRQGPNYRHHQNFTAFKLYSASDDGGVWDWRAREDGIYLKIKAERGVN.

Residues 1–20 form the signal peptide; the sequence is MQNLSILLVCSFCILGHVSS. Asparagine 86 carries an N-linked (GlcNAc...) asparagine glycan.

It belongs to the plant self-incompatibility (S1) protein family.

The protein resides in the secreted. The polypeptide is S-protein homolog 23 (Arabidopsis thaliana (Mouse-ear cress)).